The following is a 981-amino-acid chain: Amidohydrolase tasK (981 aa).

Residues 1–36 (MDDQKGPLPPYTPTATAPPPASMRQRRPPGRRRALR) are disordered. Residues 7 to 21 (PLPPYTPTATAPPPA) show a composition bias toward pro residues. Basic residues predominate over residues 24–36 (RQRRPPGRRRALR). Residues 40 to 57 (TVRVLALACLAFVVLAQW) traverse the membrane as a helical segment. Positions 86 to 107 (LRVRPQDPAGPGRSKNDRYLDG) are disordered. Fe(2+) is bound by residues His187 and His189. 2 residues coordinate Zn(2+): His187 and His189. Asn407 is a glycosylation site (N-linked (GlcNAc...) asparagine). Residues 819-838 (KKQQKQQQQQQQQQQQQHGT) form a disordered region. A compositionally biased stretch (low complexity) spans 823–835 (KQQQQQQQQQQQQ). The N-linked (GlcNAc...) asparagine glycan is linked to Asn891.

It belongs to the metallo-dependent hydrolases superfamily. Requires Fe(2+) as cofactor. Mn(2+) serves as cofactor. It depends on Zn(2+) as a cofactor.

The protein localises to the membrane. In terms of biological role, amidohydrolase; part of the gene cluster that mediates the biosynthesis of the tetramic acids Sch210971 and Sch210972, potential anti-HIV fungal natural product that contain a decalin core. The PKS module of tasS together with the enoylreductase tasC catalyze the formation of the polyketide unit which is then conjugated to 4-hydroxyl-4-methyl glutamate (HMG) by the condensation domain of the tasS NRPS module. One unique structural feature of Sch210971 and Sch210972 is the tetramic acid motif proposed to be derived from the non-proteinogenic amino acid HMG, by a Dieckmann-type condensation catalyzed by the reductase domain of tasS. The aldolase tasA catalyzes the aldol condensation of 2 molecules of pyruvic acid to yield the intermediate 4-hydroxyl-4-methyl-2-oxoglutarate (HMOG), which can then be stereoselectively transaminated, may be by tasG, to form HMG. The Diels-Alderase tas3 then uses the Dieckmann product of tasS as substrate and catalyzes the Diels-Alder cycloaddition to form the decalin ring of Sch210971 and Sch210972. The polypeptide is Amidohydrolase tasK (Hapsidospora irregularis).